A 687-amino-acid polypeptide reads, in one-letter code: Threonine--tRNA ligase (687 aa).

The TGS domain occupies 1–67 (MAHLIEAAPN…EQDSKFTPVP (67 aa)). Residues 266–572 (DHRRLGAELD…LLEHYAGAFP (307 aa)) form a catalytic region. Residues Cys371, His422, and His549 each contribute to the Zn(2+) site.

This sequence belongs to the class-II aminoacyl-tRNA synthetase family. In terms of assembly, homodimer. It depends on Zn(2+) as a cofactor.

It localises to the cytoplasm. It carries out the reaction tRNA(Thr) + L-threonine + ATP = L-threonyl-tRNA(Thr) + AMP + diphosphate + H(+). In terms of biological role, catalyzes the attachment of threonine to tRNA(Thr) in a two-step reaction: L-threonine is first activated by ATP to form Thr-AMP and then transferred to the acceptor end of tRNA(Thr). Also edits incorrectly charged L-seryl-tRNA(Thr). The sequence is that of Threonine--tRNA ligase from Corynebacterium diphtheriae (strain ATCC 700971 / NCTC 13129 / Biotype gravis).